A 346-amino-acid chain; its full sequence is N-acetyl-gamma-glutamyl-phosphate reductase (346 aa).

C149 is a catalytic residue.

The protein belongs to the NAGSA dehydrogenase family. Type 1 subfamily.

The protein resides in the cytoplasm. It carries out the reaction N-acetyl-L-glutamate 5-semialdehyde + phosphate + NADP(+) = N-acetyl-L-glutamyl 5-phosphate + NADPH + H(+). The protein operates within amino-acid biosynthesis; L-arginine biosynthesis; N(2)-acetyl-L-ornithine from L-glutamate: step 3/4. Functionally, catalyzes the NADPH-dependent reduction of N-acetyl-5-glutamyl phosphate to yield N-acetyl-L-glutamate 5-semialdehyde. The sequence is that of N-acetyl-gamma-glutamyl-phosphate reductase from Oceanobacillus iheyensis (strain DSM 14371 / CIP 107618 / JCM 11309 / KCTC 3954 / HTE831).